A 286-amino-acid polypeptide reads, in one-letter code: 4-diphosphocytidyl-2-C-methyl-D-erythritol kinase (286 aa).

Lysine 11 is a catalytic residue. 93–103 (PFGAGLGGGSS) contacts ATP. Residue aspartate 135 is part of the active site.

The protein belongs to the GHMP kinase family. IspE subfamily.

It carries out the reaction 4-CDP-2-C-methyl-D-erythritol + ATP = 4-CDP-2-C-methyl-D-erythritol 2-phosphate + ADP + H(+). It functions in the pathway isoprenoid biosynthesis; isopentenyl diphosphate biosynthesis via DXP pathway; isopentenyl diphosphate from 1-deoxy-D-xylulose 5-phosphate: step 3/6. Its function is as follows. Catalyzes the phosphorylation of the position 2 hydroxy group of 4-diphosphocytidyl-2C-methyl-D-erythritol. The sequence is that of 4-diphosphocytidyl-2-C-methyl-D-erythritol kinase from Prosthecochloris aestuarii (strain DSM 271 / SK 413).